An 83-amino-acid chain; its full sequence is U5-theraphotoxin-Hs1b 2 (83 aa).

The signal sequence occupies residues 1–21 (MQTSMFLTLTGLVLLFVVCYA). Residues 22-49 (SESEEKEFPKELLSSIFAADSDFKEEER) constitute a propeptide that is removed on maturation. 3 disulfide bridges follow: Cys51-Cys63, Cys56-Cys68, and Cys62-Cys75.

Belongs to the neurotoxin 10 (Hwtx-1) family. 51 (Hntx-8) subfamily. Hntx-8 sub-subfamily. Expressed by the venom gland.

It is found in the secreted. In terms of biological role, agglutinates erythrocytes. This chain is U5-theraphotoxin-Hs1b 2, found in Cyriopagopus schmidti (Chinese bird spider).